We begin with the raw amino-acid sequence, 111 residues long: Aspartate 1-decarboxylase (111 aa).

Residue Ser25 is the Schiff-base intermediate with substrate; via pyruvic acid of the active site. At Ser25 the chain carries Pyruvic acid (Ser). Substrate is bound at residue Thr57. The Proton donor role is filled by Tyr58. Residue 73–75 (GPA) participates in substrate binding.

The protein belongs to the PanD family. In terms of assembly, heterooctamer of four alpha and four beta subunits. Requires pyruvate as cofactor. In terms of processing, is synthesized initially as an inactive proenzyme, which is activated by self-cleavage at a specific serine bond to produce a beta-subunit with a hydroxyl group at its C-terminus and an alpha-subunit with a pyruvoyl group at its N-terminus.

It is found in the cytoplasm. It catalyses the reaction L-aspartate + H(+) = beta-alanine + CO2. It participates in cofactor biosynthesis; (R)-pantothenate biosynthesis; beta-alanine from L-aspartate: step 1/1. Functionally, catalyzes the pyruvoyl-dependent decarboxylation of aspartate to produce beta-alanine. This chain is Aspartate 1-decarboxylase, found in Coxiella burnetii (strain RSA 493 / Nine Mile phase I).